An 82-amino-acid chain; its full sequence is Polyketide biosynthesis acyl-carrier-protein AcpK (82 aa).

One can recognise a Carrier domain in the interval 4–79 (QRIFEVLITN…ELAEVLYDKV (76 aa)). O-(pantetheine 4'-phosphoryl)serine is present on serine 39.

4'-phosphopantetheine is transferred from CoA to a specific serine of apo-ACP by sfp.

Its subcellular location is the cytoplasm. It participates in antibiotic biosynthesis; bacillaene biosynthesis. Involved in some intermediate steps for the synthesis of the antibiotic polyketide bacillaene which is involved in secondary metabolism. The protein is Polyketide biosynthesis acyl-carrier-protein AcpK (acpK) of Bacillus subtilis (strain 168).